The sequence spans 445 residues: Tubulin beta chain (445 aa).

GTP-binding residues include Gln11, Glu69, Ser138, Gly142, Thr143, Gly144, Asn204, and Asn226. Glu69 contributes to the Mg(2+) binding site. Residues Gln426 to Ala445 are disordered. Over residues Thr429–Ala445 the composition is skewed to acidic residues.

The protein belongs to the tubulin family. As to quaternary structure, dimer of alpha and beta chains. A typical microtubule is a hollow water-filled tube with an outer diameter of 25 nm and an inner diameter of 15 nM. Alpha-beta heterodimers associate head-to-tail to form protofilaments running lengthwise along the microtubule wall with the beta-tubulin subunit facing the microtubule plus end conferring a structural polarity. Microtubules usually have 13 protofilaments but different protofilament numbers can be found in some organisms and specialized cells. Interacts with DCX/apicortin; the interaction stabilizes microtubule assembly. Mg(2+) serves as cofactor.

Its subcellular location is the cytoplasm. The protein localises to the cytoskeleton. In terms of biological role, tubulin is the major constituent of microtubules, a cylinder consisting of laterally associated linear protofilaments composed of alpha- and beta-tubulin heterodimers. Microtubules grow by the addition of GTP-tubulin dimers to the microtubule end, where a stabilizing cap forms. Below the cap, tubulin dimers are in GDP-bound state, owing to GTPase activity of alpha-tubulin. In Plasmodium falciparum (isolate 3D7), this protein is Tubulin beta chain.